The primary structure comprises 661 residues: Fusaric acid cluster transcription factor FUB12 (661 aa).

Positions 17 to 48 (CVPCRTRKIKCNAAVVGLPCGSCVSRECPDEC) form a DNA-binding region, zn(2)-C6 fungal-type. 2 disordered regions span residues 57-131 (TVKG…RPPG) and 151-185 (SAAQTDASDHQSNDEPDDSFNSQIHHWNPPPQLDD). Residues 73-98 (PDTNGSILSPRQQQLPTNVSRQTTDS) are compositionally biased toward polar residues. The segment covering 99–109 (SHSDPVEESIH) has biased composition (basic and acidic residues). The span at 110-119 (ASHTGSSLRN) shows a compositional bias: polar residues. The span at 120-129 (DTPHSRDRRP) shows a compositional bias: basic and acidic residues.

It is found in the nucleus. Transcription factor that is involved in the formation of the two Fusaric acid derivatives, dehydrofusaric acid and fusarinolic acid, serving as a detoxification mechanism. This is Fusaric acid cluster transcription factor FUB12 from Gibberella fujikuroi (strain CBS 195.34 / IMI 58289 / NRRL A-6831) (Bakanae and foot rot disease fungus).